The primary structure comprises 209 residues: Large ribosomal subunit protein uL3 (209 aa).

The interval 118-150 (GFQGAIKRHGQSRGPMTHGSRYHRRPGSMGPVD) is disordered.

This sequence belongs to the universal ribosomal protein uL3 family. In terms of assembly, part of the 50S ribosomal subunit. Forms a cluster with proteins L14 and L19.

Functionally, one of the primary rRNA binding proteins, it binds directly near the 3'-end of the 23S rRNA, where it nucleates assembly of the 50S subunit. This chain is Large ribosomal subunit protein uL3, found in Bacillus pumilus (strain SAFR-032).